The primary structure comprises 552 residues: CTP synthase (552 aa).

The interval 1–270 (MTKFVFVTGG…DGLICDKLRL (270 aa)) is amidoligase domain. CTP is bound at residue S13. S13 is a UTP binding site. ATP is bound by residues 14 to 19 (SLGKGI) and D71. Residues D71 and E144 each coordinate Mg(2+). CTP contacts are provided by residues 151 to 153 (DIE), 191 to 196 (KTKPTQ), and K227. UTP-binding positions include 191–196 (KTKPTQ) and K227. A Glutamine amidotransferase type-1 domain is found at 295 to 548 (QIAMVGKYVE…IKAAVEHQKP (254 aa)). G357 provides a ligand contact to L-glutamine. C384 acts as the Nucleophile; for glutamine hydrolysis in catalysis. L-glutamine contacts are provided by residues 385 to 388 (LGMQ) and E408. Residues 432–451 (KTRSENSDLGGTMRLGAQSS) form a disordered region. R474 is a binding site for L-glutamine. Active-site residues include H521 and E523.

This sequence belongs to the CTP synthase family. As to quaternary structure, homotetramer.

The enzyme catalyses UTP + L-glutamine + ATP + H2O = CTP + L-glutamate + ADP + phosphate + 2 H(+). It carries out the reaction L-glutamine + H2O = L-glutamate + NH4(+). It catalyses the reaction UTP + NH4(+) + ATP = CTP + ADP + phosphate + 2 H(+). The protein operates within pyrimidine metabolism; CTP biosynthesis via de novo pathway; CTP from UDP: step 2/2. Its activity is regulated as follows. Allosterically activated by GTP, when glutamine is the substrate; GTP has no effect on the reaction when ammonia is the substrate. The allosteric effector GTP functions by stabilizing the protein conformation that binds the tetrahedral intermediate(s) formed during glutamine hydrolysis. Inhibited by the product CTP, via allosteric rather than competitive inhibition. In terms of biological role, catalyzes the ATP-dependent amination of UTP to CTP with either L-glutamine or ammonia as the source of nitrogen. Regulates intracellular CTP levels through interactions with the four ribonucleotide triphosphates. The chain is CTP synthase from Acidovorax sp. (strain JS42).